The sequence spans 100 residues: Putative antiporter subunit mnhF2 (100 aa).

3 consecutive transmembrane segments (helical) span residues 6–26 (TNFFITSALVLFGIAFIIGLF), 38–58 (VVAFDASSAVIMCIIGIVSVI), and 62–82 (VSFLDSIMLVAIISFVSSVSI).

It belongs to the CPA3 antiporters (TC 2.A.63) subunit F family. As to quaternary structure, may form a heterooligomeric complex that consists of seven subunits: mnhA2, mnhB2, mnhC2, mnhD2, mnhE2, mnhF2 and mnhG2.

Its subcellular location is the cell membrane. In Staphylococcus haemolyticus (strain JCSC1435), this protein is Putative antiporter subunit mnhF2 (mnhF2).